An 89-amino-acid polypeptide reads, in one-letter code: Small ribosomal subunit protein uS15 (89 aa).

This sequence belongs to the universal ribosomal protein uS15 family. In terms of assembly, part of the 30S ribosomal subunit. Forms a bridge to the 50S subunit in the 70S ribosome, contacting the 23S rRNA.

In terms of biological role, one of the primary rRNA binding proteins, it binds directly to 16S rRNA where it helps nucleate assembly of the platform of the 30S subunit by binding and bridging several RNA helices of the 16S rRNA. Functionally, forms an intersubunit bridge (bridge B4) with the 23S rRNA of the 50S subunit in the ribosome. This chain is Small ribosomal subunit protein uS15, found in Dictyoglomus turgidum (strain DSM 6724 / Z-1310).